Consider the following 197-residue polypeptide: Recombination protein RecR (197 aa).

A C4-type zinc finger spans residues 57–72 (CSVCFGITEDDPCRFC). A Toprim domain is found at 79–174 (GAICVVEEPQ…RVTRLAHGIP (96 aa)).

Belongs to the RecR family.

Functionally, may play a role in DNA repair. It seems to be involved in an RecBC-independent recombinational process of DNA repair. It may act with RecF and RecO. This Geobacter sulfurreducens (strain ATCC 51573 / DSM 12127 / PCA) protein is Recombination protein RecR.